Here is an 897-residue protein sequence, read N- to C-terminus: Alpha-actinin-2 (897 aa).

Positions 1-257 (MNSMNQIETN…IMTYVSCFYH (257 aa)) are actin-binding. Calponin-homology (CH) domains lie at 41-145 (KQQR…LRFA) and 154-260 (TSAK…HAFA). Spectrin repeat units lie at residues 284 to 394 (RLME…WLLN), 404 to 509 (HLAE…ALER), 519 to 630 (QLHL…SLQE), and 640 to 743 (RLRR…EVET). EF-hand domains are found at residues 756–791 (EQMN…MGYD) and 792–827 (LGEA…ETAD). Residues Asp769, Asn773, Asp780, Asp805, Asn807, and Thr811 each coordinate Ca(2+).

Belongs to the alpha-actinin family. In terms of assembly, homodimer; antiparallel. Post-translationally, ubiquitinated by FBXL22, leading to proteasomal degradation.

The protein localises to the cytoplasm. The protein resides in the myofibril. It is found in the sarcomere. It localises to the z line. In terms of biological role, F-actin cross-linking protein which is thought to anchor actin to a variety of intracellular structures. This is a bundling protein. The polypeptide is Alpha-actinin-2 (ACTN2) (Gallus gallus (Chicken)).